Reading from the N-terminus, the 328-residue chain is Olfactory receptor 13A1 (328 aa).

Topologically, residues 1 to 43 (MKLWMESHLIVPETRPSPRMMSNQTLVTEFILQGFSEHPEYRV) are extracellular. The N-linked (GlcNAc...) asparagine glycan is linked to Asn-23. The helical transmembrane segment at 44-64 (FLFSCFLFLYSGALTGNVLIT) threads the bilayer. Over 65-72 (LAITFNPG) the chain is Cytoplasmic. Residues 73 to 93 (LHAPMYFFLLNLATMDIICTS) form a helical membrane-spanning segment. The Extracellular portion of the chain corresponds to 94-117 (SIMPKALASLVSEESSISYGGCMA). Cys-115 and Cys-207 form a disulfide bridge. A helical transmembrane segment spans residues 118 to 138 (QLYFLTWAASSELLLLTVMAY). Residues 139-157 (DRYAAICHPLHYSSMMSKV) are Cytoplasmic-facing. Residues 158-178 (FCSGLATAVWLLCAVNTAIHT) traverse the membrane as a helical segment. The Extracellular portion of the chain corresponds to 179–215 (GLMLRLDFCGPNVIIHFFCEVPPLLLLSCSSTYVNGV). Residues 216–235 (MIVLADAFYGIVNFLMTIAS) traverse the membrane as a helical segment. At 236-255 (YGFIVSSILKVKTAWGRQKA) the chain is on the cytoplasmic side. Residues 256 to 276 (FSTCSSHLTVVCMYYTAVFYA) traverse the membrane as a helical segment. Residues 277–289 (YISPVSGYSAGKS) are Extracellular-facing. The chain crosses the membrane as a helical span at residues 290 to 310 (KLAGLLYTVLSPTLNPLIYTL). Residues 311 to 328 (RNKEVKAALRKLFPFFRN) lie on the Cytoplasmic side of the membrane.

It belongs to the G-protein coupled receptor 1 family.

It is found in the cell membrane. Odorant receptor. This Homo sapiens (Human) protein is Olfactory receptor 13A1 (OR13A1).